The chain runs to 296 residues: Circadian clock oscillator protein KaiA (296 aa).

The tract at residues 2-133 (ARPGLTIALL…LRQGRADGRS (132 aa)) is psR domain, binds oxidized quinones. The KaiA N-terminal domain maps to 2–152 (ARPGLTIALL…KLSRRLQERL (151 aa)). The interval 153–161 (GYLGVFYKR) is flexible linker. In terms of domain architecture, KaiA C-terminal spans 162 to 270 (DPSRFLGSLP…CEMYRRSIPP (109 aa)).

In terms of assembly, homodimer. The KaiABC complex composition changes during the circadian cycle to control KaiC phosphorylation. Complexes KaiC(6), KaiA(2-4):KaiC(6), KaiB(6):KaiC(6) and KaiC(6):KaiB(6):KaiA(12) are among the most important forms, many form cooperatively. KaiA and CikA bind to the same region of the KaiB(fs) form and therefore compete.

Its function is as follows. Key component of the KaiABC oscillator complex, which constitutes the main circadian regulator in cyanobacteria. Complex composition changes during the circadian cycle to control KaiC phosphorylation. KaiA stimulates KaiC autophosphorylation, while KaiB sequesters KaiA, leading to KaiC autodephosphorylation. KaiA binding to the KaiC CII domain during the subjective day yields KaiA(2-4):KaiC(6) complexes which stimulate KaiC autophosphorylation. Phospho-Ser-431 KaiC accumulation triggers binding of KaiB during the subjective night to form the KaiB(6):KaiC(6) complex, leading to changes in the output regulators CikA and SasA. KaiB(6):KaiC(6) formation exposes a site for KaiA binding on KaiB that sequesters KaiA from KaiC's CII domain, making the KaiC(6):KaiB(6):KaiA(12) complex resulting in KaiC autodephosphorylation. Complete dephosphorylation of KaiC leads to dissociation of KaiA(2):KaiB(1), completing 1 cycle of the Kai oscillator. Binds oxidized quinones via the N-terminal PsR domain, allowing it to sense redox changes and possibly mediate clock input. The polypeptide is Circadian clock oscillator protein KaiA (Parasynechococcus marenigrum (strain WH8102)).